The chain runs to 869 residues: 1-phosphatidylinositol 4,5-bisphosphate phosphodiesterase 1 (869 aa).

The region spanning 269 to 304 (VSTGQLLEFFQLADINHNGLLNYFEFEKFIKILKNR) is the EF-hand domain. Ca(2+)-binding residues include aspartate 282, asparagine 284, asparagine 286, and glutamate 293. The region spanning 382–520 (YSKPLNHYFI…LKHKILLKSK (139 aa)) is the PI-PLC X-box domain. Residues histidine 395 and histidine 439 contribute to the active site. The substrate site is built by lysine 518 and lysine 520. The tract at residues 546-571 (ANEQELRMKDDSTNSSSATNSSSMQR) is disordered. Residues 558–568 (TNSSSATNSSS) show a composition bias toward low complexity. A PI-PLC Y-box domain is found at 590-709 (ISGIHGIKFR…SGYVLKPKKL (120 aa)). Substrate is bound by residues serine 614 and arginine 643. The region spanning 713 to 862 (VTKAKMIPLI…EGEQYIFCTL (150 aa)) is the C2 domain.

As to quaternary structure, interacts with SGD1. It depends on Ca(2+) as a cofactor.

It carries out the reaction a 1,2-diacyl-sn-glycero-3-phospho-(1D-myo-inositol-4,5-bisphosphate) + H2O = 1D-myo-inositol 1,4,5-trisphosphate + a 1,2-diacyl-sn-glycerol + H(+). Its function is as follows. The production of the second messenger molecules diacylglycerol (DAG) and inositol 1,4,5-trisphosphate (IP3) is mediated by activated phosphatidylinositol-specific phospholipase C enzymes. Required for cell growth, osmoresistance and expression of GPD1. The sequence is that of 1-phosphatidylinositol 4,5-bisphosphate phosphodiesterase 1 (PLC1) from Saccharomyces cerevisiae (strain ATCC 204508 / S288c) (Baker's yeast).